Here is a 689-residue protein sequence, read N- to C-terminus: Glycine--tRNA ligase beta subunit (689 aa).

Belongs to the class-II aminoacyl-tRNA synthetase family. As to quaternary structure, tetramer of two alpha and two beta subunits.

Its subcellular location is the cytoplasm. The enzyme catalyses tRNA(Gly) + glycine + ATP = glycyl-tRNA(Gly) + AMP + diphosphate. This chain is Glycine--tRNA ligase beta subunit, found in Shigella boydii serotype 4 (strain Sb227).